A 183-amino-acid chain; its full sequence is Dual-action ribosomal maturation protein DarP (183 aa).

Belongs to the DarP family.

Its subcellular location is the cytoplasm. Its function is as follows. Member of a network of 50S ribosomal subunit biogenesis factors which assembles along the 30S-50S interface, preventing incorrect 23S rRNA structures from forming. Promotes peptidyl transferase center (PTC) maturation. The protein is Dual-action ribosomal maturation protein DarP of Salmonella arizonae (strain ATCC BAA-731 / CDC346-86 / RSK2980).